The sequence spans 442 residues: Proline--tRNA ligase (442 aa).

It belongs to the class-II aminoacyl-tRNA synthetase family. ProS type 2 subfamily. As to quaternary structure, homodimer.

The protein resides in the cytoplasm. It catalyses the reaction tRNA(Pro) + L-proline + ATP = L-prolyl-tRNA(Pro) + AMP + diphosphate. Its function is as follows. Catalyzes the attachment of proline to tRNA(Pro) in a two-step reaction: proline is first activated by ATP to form Pro-AMP and then transferred to the acceptor end of tRNA(Pro). The sequence is that of Proline--tRNA ligase from Brucella anthropi (strain ATCC 49188 / DSM 6882 / CCUG 24695 / JCM 21032 / LMG 3331 / NBRC 15819 / NCTC 12168 / Alc 37) (Ochrobactrum anthropi).